The following is a 424-amino-acid chain: CinA-like protein (424 aa).

Belongs to the CinA family.

This chain is CinA-like protein, found in Shewanella halifaxensis (strain HAW-EB4).